We begin with the raw amino-acid sequence, 275 residues long: NAD(P)H-hydrate epimerase (275 aa).

The 210-residue stretch at 49-258 folds into the YjeF N-terminal domain; it reads AIKIDQELFS…ALAAKYELNL (210 aa). A (6S)-NADPHX-binding site is contributed by 102–106; that stretch reads NNGGD. Asn-103 and Asp-167 together coordinate K(+). Residues 171 to 177 and Asp-200 contribute to the (6S)-NADPHX site; that span reads GFSFKPP. Ser-203 lines the K(+) pocket.

It belongs to the NnrE/AIBP family. Requires K(+) as cofactor.

It carries out the reaction (6R)-NADHX = (6S)-NADHX. The catalysed reaction is (6R)-NADPHX = (6S)-NADPHX. Catalyzes the epimerization of the S- and R-forms of NAD(P)HX, a damaged form of NAD(P)H that is a result of enzymatic or heat-dependent hydration. This is a prerequisite for the S-specific NAD(P)H-hydrate dehydratase to allow the repair of both epimers of NAD(P)HX. In Ixodes scapularis (Black-legged tick), this protein is NAD(P)H-hydrate epimerase.